Reading from the N-terminus, the 211-residue chain is Pyrrolidone-carboxylate peptidase 1 (211 aa).

Catalysis depends on residues Glu-79, Cys-142, and His-164.

This sequence belongs to the peptidase C15 family. Homotetramer.

The protein localises to the cytoplasm. It catalyses the reaction Release of an N-terminal pyroglutamyl group from a polypeptide, the second amino acid generally not being Pro.. Removes 5-oxoproline from various penultimate amino acid residues except L-proline. In Saccharolobus solfataricus (strain ATCC 35092 / DSM 1617 / JCM 11322 / P2) (Sulfolobus solfataricus), this protein is Pyrrolidone-carboxylate peptidase 1 (pcp1).